The following is a 208-amino-acid chain: Putative dioxygenase RBE_0329 (208 aa).

Belongs to the intradiol ring-cleavage dioxygenase family.

This chain is Putative dioxygenase RBE_0329, found in Rickettsia bellii (strain RML369-C).